The primary structure comprises 182 residues: CDP-diacylglycerol--glycerol-3-phosphate 3-phosphatidyltransferase (182 aa).

Residues 1 to 12 lie on the Cytoplasmic side of the membrane; that stretch reads MQLNIPTWLTLF. The chain crosses the membrane as a helical span at residues 13–37; the sequence is RVVMIPFFVLAFYLPFKWAPLCCAL. Over 38–60 the chain is Periplasmic; that stretch reads IFVLAAVTDWFDGFLARRWKQTT. The chain crosses the membrane as a helical span at residues 61-81; that stretch reads RFGAFLDPVADKVMVAMALVL. Over 82–86 the chain is Cytoplasmic; it reads VAEHF. The chain crosses the membrane as a helical span at residues 87 to 107; the sequence is HSWWITLPAATMIAREIIISA. The Periplasmic segment spans residues 108–145; that stretch reads LREWMAEIGKRSSVAVSWIGKVKTTAQMLALVTLLWRP. A helical membrane pass occupies residues 146–168; that stretch reads DDIVSGIGIAALYVAAVLTFWSM. The Cytoplasmic portion of the chain corresponds to 169 to 181; that stretch reads FQYLYAARHDLFE.

It belongs to the CDP-alcohol phosphatidyltransferase class-I family.

It is found in the cell inner membrane. It carries out the reaction a CDP-1,2-diacyl-sn-glycerol + sn-glycerol 3-phosphate = a 1,2-diacyl-sn-glycero-3-phospho-(1'-sn-glycero-3'-phosphate) + CMP + H(+). The protein operates within phospholipid metabolism; phosphatidylglycerol biosynthesis; phosphatidylglycerol from CDP-diacylglycerol: step 1/2. In terms of biological role, catalyzes the conversion of cytidine diphosphate diacylglycerol (CDP-DG) and glycerol 3-phosphate into phosphatidylglycerol. Essential for the synthesis of anionic phospholipids, thereby playing a role in balancing the ratio of zwitterionic and anionic phospholipids, which is thought to be important for normal membrane function. This Sodalis glossinidius (strain morsitans) protein is CDP-diacylglycerol--glycerol-3-phosphate 3-phosphatidyltransferase.